We begin with the raw amino-acid sequence, 181 residues long: Cytolethal distending toxin subunit C (181 aa).

A signal peptide spans 1–15; that stretch reads MKKLAIVFTMLLIAG. Cys16 is lipidated: N-palmitoyl cysteine. Cys16 carries S-diacylglycerol cysteine lipidation. The region spanning 79–181 is the Ricin B-type lectin domain; sequence QSGWIMIRTP…NPLNTESPII (103 aa).

In terms of assembly, heterotrimer of 3 subunits, CdtA, CdtB and CdtC.

The protein localises to the cell outer membrane. Its function is as follows. Part of the tripartite complex that is required for the CDT activity. CdtC, along with CdtA, probably forms a heterodimeric subunit required for the delivery of CdtB. The protein is Cytolethal distending toxin subunit C (cdtC) of Escherichia coli.